A 51-amino-acid polypeptide reads, in one-letter code: Large ribosomal subunit protein eL39 (51 aa).

Belongs to the eukaryotic ribosomal protein eL39 family.

This is Large ribosomal subunit protein eL39 (rpl39e) from Methanothermobacter thermautotrophicus (strain ATCC 29096 / DSM 1053 / JCM 10044 / NBRC 100330 / Delta H) (Methanobacterium thermoautotrophicum).